A 266-amino-acid chain; its full sequence is Undecaprenyl-diphosphatase (266 aa).

The next 8 membrane-spanning stretches (helical) occupy residues Met-1 to Ile-21, Gln-39 to Phe-59, Ser-83 to Leu-103, Leu-111 to Ala-131, Thr-144 to Thr-164, Ala-183 to Met-203, Ser-218 to Leu-238, and Met-246 to Met-266.

This sequence belongs to the UppP family.

It is found in the cell inner membrane. The catalysed reaction is di-trans,octa-cis-undecaprenyl diphosphate + H2O = di-trans,octa-cis-undecaprenyl phosphate + phosphate + H(+). Its function is as follows. Catalyzes the dephosphorylation of undecaprenyl diphosphate (UPP). Confers resistance to bacitracin. The polypeptide is Undecaprenyl-diphosphatase (Shewanella woodyi (strain ATCC 51908 / MS32)).